Reading from the N-terminus, the 458-residue chain is Exodeoxyribonuclease 7 large subunit (458 aa).

It belongs to the XseA family. As to quaternary structure, heterooligomer composed of large and small subunits.

The protein localises to the cytoplasm. It catalyses the reaction Exonucleolytic cleavage in either 5'- to 3'- or 3'- to 5'-direction to yield nucleoside 5'-phosphates.. Its function is as follows. Bidirectionally degrades single-stranded DNA into large acid-insoluble oligonucleotides, which are then degraded further into small acid-soluble oligonucleotides. The chain is Exodeoxyribonuclease 7 large subunit from Escherichia coli O81 (strain ED1a).